Reading from the N-terminus, the 809-residue chain is Putative zinc metalloprotease TRE2 (809 aa).

Composition is skewed to polar residues over residues 1 to 12 (MRSSYQPVSTTN) and 20 to 30 (PTASSSHNLLM). Residues 1 to 66 (MRSSYQPVST…PSYEFDIEDP (66 aa)) form a disordered region. At 1–125 (MRSSYQPVST…KIGNPFILRR (125 aa)) the chain is on the cytoplasmic side. The span at 37-50 (SPPSSNDNSIETNI) shows a compositional bias: low complexity. Residues 126 to 146 (FFYIIFMSFIAYYVLSSGYLF) form a helical; Signal-anchor for type II membrane protein membrane-spanning segment. Residues 147–809 (NEKASGSKGM…VEETNDIGYK (663 aa)) are Extracellular-facing. An N-linked (GlcNAc...) asparagine glycan is attached at asparagine 228. The PA domain maps to 255 to 349 (SNGKLSKVSL…STGDASGLNW (95 aa)). N-linked (GlcNAc...) asparagine glycosylation is found at asparagine 669 and asparagine 736.

It belongs to the peptidase M28 family. M28B subfamily.

It localises to the membrane. The protein is Putative zinc metalloprotease TRE2 (TRE2) of Saccharomyces cerevisiae (strain ATCC 204508 / S288c) (Baker's yeast).